Here is a 256-residue protein sequence, read N- to C-terminus: Thiazole synthase (256 aa).

Lysine 95 (schiff-base intermediate with DXP) is an active-site residue. Residues glycine 156, 182-183 (AG), and 204-205 (NT) contribute to the 1-deoxy-D-xylulose 5-phosphate site.

The protein belongs to the ThiG family. In terms of assembly, homotetramer. Forms heterodimers with either ThiH or ThiS.

The protein localises to the cytoplasm. The enzyme catalyses [ThiS sulfur-carrier protein]-C-terminal-Gly-aminoethanethioate + 2-iminoacetate + 1-deoxy-D-xylulose 5-phosphate = [ThiS sulfur-carrier protein]-C-terminal Gly-Gly + 2-[(2R,5Z)-2-carboxy-4-methylthiazol-5(2H)-ylidene]ethyl phosphate + 2 H2O + H(+). The protein operates within cofactor biosynthesis; thiamine diphosphate biosynthesis. Its function is as follows. Catalyzes the rearrangement of 1-deoxy-D-xylulose 5-phosphate (DXP) to produce the thiazole phosphate moiety of thiamine. Sulfur is provided by the thiocarboxylate moiety of the carrier protein ThiS. In vitro, sulfur can be provided by H(2)S. This Salmonella paratyphi A (strain ATCC 9150 / SARB42) protein is Thiazole synthase.